Consider the following 348-residue polypeptide: MDNSSICNPNATICEGDSCIAPESNFNAILSVVMSTVLTILLALVMFSMGCNVELHKFLGHLRRPWGIVVGFLCQFGIMPLTGFVLSVAFGILPVQAVVVLIQGCCPGGTASNILAYWVDGDMDLSVSMTTCSTLLALGMMPLCLFIYTKMWVDSGTIVIPYDSIGTSLVALVIPVSIGMYVNHKWPQKAKIILKIGSIAGAILIVLIAVVGGILYQSAWTIEPKLWIIGTIYPIAGYGLGFFLARIAGQPWYRCRTVALETGLQNTQLCSTIVQLSFSPEDLNLVFTFPLIYSIFQIAFAAILLGAYVAYKKCHGKNNTELQEKTDNEMEPRSSFQETNKGFQPDEK.

Residues 1 to 28 (MDNSSICNPNATICEGDSCIAPESNFNA) are Extracellular-facing. Asparagine 3 and asparagine 10 each carry an N-linked (GlcNAc...) asparagine glycan. The chain crosses the membrane as a helical span at residues 29–49 (ILSVVMSTVLTILLALVMFSM). The Cytoplasmic segment spans residues 50–81 (GCNVELHKFLGHLRRPWGIVVGFLCQFGIMPL). Residues 82–102 (TGFVLSVAFGILPVQAVVVLI) traverse the membrane as a helical segment. The Extracellular segment spans residues 103–126 (QGCCPGGTASNILAYWVDGDMDLS). A helical transmembrane segment spans residues 127–147 (VSMTTCSTLLALGMMPLCLFI). The Cytoplasmic segment spans residues 148-157 (YTKMWVDSGT). A helical membrane pass occupies residues 158–178 (IVIPYDSIGTSLVALVIPVSI). Over 179–195 (GMYVNHKWPQKAKIILK) the chain is Extracellular. The helical transmembrane segment at 196 to 216 (IGSIAGAILIVLIAVVGGILY) threads the bilayer. Over 217–224 (QSAWTIEP) the chain is Cytoplasmic. The helical transmembrane segment at 225-245 (KLWIIGTIYPIAGYGLGFFLA) threads the bilayer. Over 246 to 284 (RIAGQPWYRCRTVALETGLQNTQLCSTIVQLSFSPEDLN) the chain is Extracellular. Residues 285-305 (LVFTFPLIYSIFQIAFAAILL) traverse the membrane as a helical segment. Residues 306-348 (GAYVAYKKCHGKNNTELQEKTDNEMEPRSSFQETNKGFQPDEK) are Cytoplasmic-facing. Positions 322–332 (LQEKTDNEMEP) are enriched in basic and acidic residues. Residues 322-348 (LQEKTDNEMEPRSSFQETNKGFQPDEK) are disordered. Serine 335 carries the post-translational modification Phosphoserine.

It belongs to the bile acid:sodium symporter (BASS) (TC 2.A.28) family. Monomer and homodimer. In terms of tissue distribution, mainly expressed in ileum and kidney, lower expression in jejunum.

Its subcellular location is the membrane. It catalyses the reaction taurocholate(out) + 2 Na(+)(out) = taurocholate(in) + 2 Na(+)(in). It carries out the reaction cholate(out) + 2 Na(+)(out) = cholate(in) + 2 Na(+)(in). The catalysed reaction is taurochenodeoxycholate(out) + 2 Na(+)(out) = taurochenodeoxycholate(in) + 2 Na(+)(in). The enzyme catalyses tauroursodeoxycholate(out) + 2 Na(+)(out) = tauroursodeoxycholate(in) + 2 Na(+)(in). It catalyses the reaction glycocholate(out) + 2 Na(+)(out) = glycocholate(in) + 2 Na(+)(in). It carries out the reaction tauronorcholate(out) + 2 Na(+)(out) = tauronorcholate(in) + 2 Na(+)(in). The catalysed reaction is tauroallocholate(out) + 2 Na(+)(out) = tauroallocholate(in) + 2 Na(+)(in). The enzyme catalyses taurodeoxycholate(out) + 2 Na(+)(out) = taurodeoxycholate(in) + 2 Na(+)(in). It catalyses the reaction tauro-beta-muricholate(out) + 2 Na(+)(out) = tauro-beta-muricholate(in) + 2 Na(+)(in). In terms of biological role, plays a critical role in the sodium-dependent reabsorption of bile acids from the lumen of the small intestine. Transports various bile acids, unconjugated or conjugated, such as cholate and taurocholate. Also responsible for bile acid transport in the renal proximal tubules, a salvage mechanism that helps conserve bile acids. Works collaboratively with the Na(+)-taurocholate cotransporting polypeptide (NTCP), the organic solute transporter (OST), and the bile salt export pump (BSEP), to ensure efficacious biological recycling of bile acids during enterohepatic circulation. This is Ileal sodium/bile acid cotransporter (SLC10A2) from Cricetulus griseus (Chinese hamster).